The primary structure comprises 327 residues: Tryptophan--tRNA ligase (327 aa).

Residues 9 to 11 and 17 to 18 each bind ATP; these read QPS and GN. The 'HIGH' region signature appears at 10–18; that stretch reads PSGTLTLGN. An L-tryptophan-binding site is contributed by D132. ATP contacts are provided by residues 144-146, I183, and 192-196; these read GDD and KMSKS. The short motif at 192-196 is the 'KMSKS' region element; it reads KMSKS.

It belongs to the class-I aminoacyl-tRNA synthetase family. Homodimer.

It localises to the cytoplasm. The enzyme catalyses tRNA(Trp) + L-tryptophan + ATP = L-tryptophyl-tRNA(Trp) + AMP + diphosphate + H(+). Its function is as follows. Catalyzes the attachment of tryptophan to tRNA(Trp). The chain is Tryptophan--tRNA ligase from Oceanobacillus iheyensis (strain DSM 14371 / CIP 107618 / JCM 11309 / KCTC 3954 / HTE831).